The chain runs to 363 residues: NAD(P)H-quinone oxidoreductase subunit 1, chloroplastic (363 aa).

Transmembrane regions (helical) follow at residues 26–46 (IIWI…GVLV), 98–118 (FSIG…VIPF), 127–147 (LTIG…GLLM), 246–266 (TEYS…NLLV), 268–288 (SLFV…YIFV), 300–320 (VFGP…FLFI), and 336–356 (LLNL…LLTT).

This sequence belongs to the complex I subunit 1 family. As to quaternary structure, NDH is composed of at least 16 different subunits, 5 of which are encoded in the nucleus.

It localises to the plastid. Its subcellular location is the chloroplast thylakoid membrane. It catalyses the reaction a plastoquinone + NADH + (n+1) H(+)(in) = a plastoquinol + NAD(+) + n H(+)(out). It carries out the reaction a plastoquinone + NADPH + (n+1) H(+)(in) = a plastoquinol + NADP(+) + n H(+)(out). In terms of biological role, NDH shuttles electrons from NAD(P)H:plastoquinone, via FMN and iron-sulfur (Fe-S) centers, to quinones in the photosynthetic chain and possibly in a chloroplast respiratory chain. The immediate electron acceptor for the enzyme in this species is believed to be plastoquinone. Couples the redox reaction to proton translocation, and thus conserves the redox energy in a proton gradient. This chain is NAD(P)H-quinone oxidoreductase subunit 1, chloroplastic, found in Coffea arabica (Arabian coffee).